Consider the following 447-residue polypeptide: Probable glycine dehydrogenase (decarboxylating) subunit 1 (447 aa).

This sequence belongs to the GcvP family. N-terminal subunit subfamily. As to quaternary structure, the glycine cleavage system is composed of four proteins: P, T, L and H. In this organism, the P 'protein' is a heterodimer of two subunits.

It carries out the reaction N(6)-[(R)-lipoyl]-L-lysyl-[glycine-cleavage complex H protein] + glycine + H(+) = N(6)-[(R)-S(8)-aminomethyldihydrolipoyl]-L-lysyl-[glycine-cleavage complex H protein] + CO2. Functionally, the glycine cleavage system catalyzes the degradation of glycine. The P protein binds the alpha-amino group of glycine through its pyridoxal phosphate cofactor; CO(2) is released and the remaining methylamine moiety is then transferred to the lipoamide cofactor of the H protein. This chain is Probable glycine dehydrogenase (decarboxylating) subunit 1, found in Metallosphaera sedula (strain ATCC 51363 / DSM 5348 / JCM 9185 / NBRC 15509 / TH2).